Consider the following 308-residue polypeptide: D-alanine--D-alanine ligase B (308 aa).

In terms of domain architecture, ATP-grasp spans 102–302; sequence KKVAAAAGVV…FAELLSWMVE (201 aa). 128–183 is a binding site for ATP; sequence PMKPPYVVKPVREGSSFGVVIVKEDQPHPPQVIGSADWKYGDEVMVEGYIAGRELT. Mg(2+)-binding residues include Asp-252, Glu-269, and Asn-271.

It belongs to the D-alanine--D-alanine ligase family. It depends on Mg(2+) as a cofactor. Mn(2+) serves as cofactor.

It is found in the cytoplasm. It catalyses the reaction 2 D-alanine + ATP = D-alanyl-D-alanine + ADP + phosphate + H(+). It participates in cell wall biogenesis; peptidoglycan biosynthesis. Its function is as follows. Cell wall formation. This chain is D-alanine--D-alanine ligase B, found in Brucella suis biovar 1 (strain 1330).